The sequence spans 462 residues: Argininosuccinate lyase (462 aa).

This sequence belongs to the lyase 1 family. Argininosuccinate lyase subfamily.

The protein resides in the cytoplasm. It catalyses the reaction 2-(N(omega)-L-arginino)succinate = fumarate + L-arginine. Its pathway is amino-acid biosynthesis; L-arginine biosynthesis; L-arginine from L-ornithine and carbamoyl phosphate: step 3/3. The chain is Argininosuccinate lyase from Bacillus anthracis (strain A0248).